The sequence spans 271 residues: uncharacterized protein (271 aa).

The AB hydrolase-1 domain maps to 24–124 (PIILLVHGGG…QVHVMIPHEP (101 aa)).

This sequence belongs to the AB hydrolase superfamily.

This is an uncharacterized protein from Bacillus subtilis (strain 168).